An 840-amino-acid polypeptide reads, in one-letter code: Leucine--tRNA ligase (840 aa).

The short motif at 44–55 is the 'HIGH' region element; that stretch reads PYPSANGLHVGH. The short motif at 617-621 is the 'KMSKS' region element; sequence KMSKS. Lys620 provides a ligand contact to ATP.

It belongs to the class-I aminoacyl-tRNA synthetase family.

It localises to the cytoplasm. The catalysed reaction is tRNA(Leu) + L-leucine + ATP = L-leucyl-tRNA(Leu) + AMP + diphosphate. In Borreliella burgdorferi (strain ZS7) (Borrelia burgdorferi), this protein is Leucine--tRNA ligase.